The chain runs to 107 residues: Ig kappa chain V-VI region TEPC 601/TEPC 191 (107 aa).

Positions 1 to 23 (EIVLTQSPAITAASLGQKVTITC) are framework-1. Cysteines 23 and 87 form a disulfide. The tract at residues 24–33 (SASSSVSYMH) is complementarity-determining-1. The tract at residues 34–48 (WYQQKSGTSPKPWIY) is framework-2. The tract at residues 49 to 55 (EISKLAS) is complementarity-determining-2. The framework-3 stretch occupies residues 56-87 (GVPARFSGSGSGTSYSLTISSMEAEDAAIYYC). The interval 88–96 (QQWNYPLIT) is complementarity-determining-3. The tract at residues 97–106 (FGAGTKLELK) is framework-4.

This chain is Ig kappa chain V-VI region TEPC 601/TEPC 191, found in Mus musculus (Mouse).